Reading from the N-terminus, the 232-residue chain is 7-cyano-7-deazaguanine synthase (232 aa).

8–18 (FSGGQDSTTCL) lines the ATP pocket. Residues Cys-189, Cys-198, Cys-201, and Cys-204 each contribute to the Zn(2+) site.

This sequence belongs to the QueC family. The cofactor is Zn(2+).

The catalysed reaction is 7-carboxy-7-deazaguanine + NH4(+) + ATP = 7-cyano-7-deazaguanine + ADP + phosphate + H2O + H(+). It functions in the pathway purine metabolism; 7-cyano-7-deazaguanine biosynthesis. Functionally, catalyzes the ATP-dependent conversion of 7-carboxy-7-deazaguanine (CDG) to 7-cyano-7-deazaguanine (preQ(0)). In Photorhabdus laumondii subsp. laumondii (strain DSM 15139 / CIP 105565 / TT01) (Photorhabdus luminescens subsp. laumondii), this protein is 7-cyano-7-deazaguanine synthase.